Here is a 282-residue protein sequence, read N- to C-terminus: Bis(5'-nucleosyl)-tetraphosphatase, symmetrical (282 aa).

It belongs to the Ap4A hydrolase family.

The catalysed reaction is P(1),P(4)-bis(5'-adenosyl) tetraphosphate + H2O = 2 ADP + 2 H(+). In terms of biological role, hydrolyzes diadenosine 5',5'''-P1,P4-tetraphosphate to yield ADP. This Escherichia coli O127:H6 (strain E2348/69 / EPEC) protein is Bis(5'-nucleosyl)-tetraphosphatase, symmetrical.